The chain runs to 357 residues: Protein-glutamate methylesterase/protein-glutamine glutaminase 1 (357 aa).

The 118-residue stretch at Lys-7 to Thr-124 folds into the Response regulatory domain. At Asp-58 the chain carries 4-aspartylphosphate. The CheB-type methylesterase domain maps to Leu-158–Phe-350. Catalysis depends on residues Ser-170, His-196, and Asp-292.

It belongs to the CheB family. In terms of processing, phosphorylated by CheA. Phosphorylation of the N-terminal regulatory domain activates the methylesterase activity.

It is found in the cytoplasm. The catalysed reaction is [protein]-L-glutamate 5-O-methyl ester + H2O = L-glutamyl-[protein] + methanol + H(+). It carries out the reaction L-glutaminyl-[protein] + H2O = L-glutamyl-[protein] + NH4(+). In terms of biological role, involved in chemotaxis. Part of a chemotaxis signal transduction system that modulates chemotaxis in response to various stimuli. Catalyzes the demethylation of specific methylglutamate residues introduced into the chemoreceptors (methyl-accepting chemotaxis proteins or MCP) by CheR. Also mediates the irreversible deamidation of specific glutamine residues to glutamic acid. The chain is Protein-glutamate methylesterase/protein-glutamine glutaminase 1 from Cupriavidus metallidurans (strain ATCC 43123 / DSM 2839 / NBRC 102507 / CH34) (Ralstonia metallidurans).